Consider the following 332-residue polypeptide: MSSDDLSLYFNEIVNNVNFRIKNFVKSNFKTLEEASFHLFTAGGKRLRPLVLVSSSDLIGGDRERAYKAAAAVEILHNFTLVHDDIMDNDGLRRGLPTVHVKWGEPMAILAGDYLHAKAFEALNEALKGLDGNTFYKAFSIFITSIEIISEGQAMDMSFENRLDVTEEEYIQMIKGKTAMLFSCSAALGGIINKANDDVVKKLTEYGLNLGISFQIVDDILGIIGDEKELGKPIYSDIREGKKTILVIKTLSEATEDEKKILVSTLGNKEAKKEDLERASEIIRKHSLQYAYDLAKKYSDLAIENLREIPVSNKTAEKALKYLAQFTIQRRK.

Isopentenyl diphosphate is bound by residues Lys45, Arg48, and His77. Mg(2+)-binding residues include Asp84 and Asp88. Arg93 contributes to the an all-trans-polyprenyl diphosphate binding site. Arg94 is an isopentenyl diphosphate binding site. An all-trans-polyprenyl diphosphate is bound by residues Lys177, Thr178, Gln215, Lys232, and Lys242.

Belongs to the FPP/GGPP synthase family. Requires Mg(2+) as cofactor.

It catalyses the reaction isopentenyl diphosphate + (2E,6E)-farnesyl diphosphate = (2E,6E,10E)-geranylgeranyl diphosphate + diphosphate. It functions in the pathway isoprenoid biosynthesis; geranylgeranyl diphosphate biosynthesis; geranylgeranyl diphosphate from farnesyl diphosphate and isopentenyl diphosphate: step 1/1. Catalyzes the condensation of isopentenyl pyrophosphate with the allylic pyrophosphates to yield geranylgeranyl diphosphate (GGPP) which is a precursor of the ether-linked lipids. In Saccharolobus solfataricus (strain ATCC 35092 / DSM 1617 / JCM 11322 / P2) (Sulfolobus solfataricus), this protein is Geranylgeranyl diphosphate synthase (gds).